The sequence spans 746 residues: Exostosin-1 (746 aa).

Residues 1–7 are Cytoplasmic-facing; sequence MQAKKRY. Residues 8-28 traverse the membrane as a helical; Signal-anchor for type II membrane protein segment; sequence FILLSAGSCLALLFYFGGLQF. Residues 29–746 lie on the Lumenal side of the membrane; it reads RASRSHSRRE…RKKYRDIERL (718 aa). A glycan (N-linked (GlcNAc...) asparagine) is linked at asparagine 89. Disulfide bonds link cysteine 98/cysteine 103 and cysteine 109/cysteine 152. A protein is bound by residues leucine 166 and tyrosine 203. UDP contacts are provided by lysine 267, lysine 269, tyrosine 271, and arginine 280. The cysteines at positions 298 and 312 are disulfide-linked. Histidine 300 contacts a protein. UDP contacts are provided by tyrosine 319 and tyrosine 324. N-linked (GlcNAc...) asparagine glycosylation occurs at asparagine 330. 2 disulfides stabilise this stretch: cysteine 334–cysteine 355 and cysteine 652–cysteine 704. UDP-binding residues include arginine 346 and glutamate 349.

The protein belongs to the glycosyltransferase 47 family. In terms of assembly, part of the heparan sulfate polymerase, a dimeric complex composed of EXT1 and EXT2. Could also form homooligomeric complexes. Interacts with NDST1. N-glycosylated.

Its subcellular location is the golgi apparatus membrane. The protein resides in the golgi apparatus. It is found in the cis-Golgi network membrane. It localises to the endoplasmic reticulum membrane. It carries out the reaction 3-O-{alpha-D-GlcNAc-[(1-&gt;4)-beta-D-GlcA-(1-&gt;4)-alpha-D-GlcNAc](n)-(1-&gt;4)-beta-D-GlcA-(1-&gt;3)-beta-D-Gal-(1-&gt;3)-beta-D-Gal-(1-&gt;4)-beta-D-Xyl}-L-seryl-[protein] + UDP-alpha-D-glucuronate = 3-O-{[(1-&gt;4)-beta-D-GlcA-(1-&gt;4)-alpha-D-GlcNAc](n+1)-(1-&gt;4)-beta-D-GlcA-(1-&gt;3)-beta-D-Gal-(1-&gt;3)-beta-D-Gal-(1-&gt;4)-beta-D-Xyl}-L-seryl-[protein] + UDP + H(+). Its pathway is protein modification; protein glycosylation. Glycosyltransferase forming with EXT2 the heterodimeric heparan sulfate polymerase which catalyzes the elongation of the heparan sulfate glycan backbone. Glycan backbone extension consists in the alternating transfer of (1-&gt;4)-beta-D-GlcA and (1-&gt;4)-alpha-D-GlcNAc residues from their respective UDP-sugar donors. Both EXT1 and EXT2 are required for the full activity of the polymerase since EXT1 bears the N-acetylglucosaminyl-proteoglycan 4-beta-glucuronosyltransferase activity within the complex while EXT2 carries the glucuronosyl-N-acetylglucosaminyl-proteoglycan 4-alpha-N-acetylglucosaminyltransferase activity. Heparan sulfate proteoglycans are ubiquitous components of the extracellular matrix and play an important role in tissue homeostasis and signaling. This chain is Exostosin-1 (EXT1), found in Pongo abelii (Sumatran orangutan).